Here is a 117-residue protein sequence, read N- to C-terminus: NADH dehydrogenase [ubiquinone] 1 beta subcomplex subunit 9 (117 aa).

Ser2 bears the N-acetylserine mark.

Belongs to the complex I LYR family. As to quaternary structure, complex I is composed of at least 49 different subunits. As to expression, expressed in roots, stems, flowers, rosette leaves, cauline leaves and siliques, with the highest expression in the stems.

The protein localises to the mitochondrion inner membrane. Its function is as follows. Accessory subunit of the mitochondrial membrane respiratory chain NADH dehydrogenase (Complex I), that is believed to be not involved in catalysis. Complex I functions in the transfer of electrons from NADH to the respiratory chain. The immediate electron acceptor for the enzyme is believed to be ubiquinone. Is required for correct plant growth and development. The chain is NADH dehydrogenase [ubiquinone] 1 beta subcomplex subunit 9 (CIB22) from Arabidopsis thaliana (Mouse-ear cress).